The following is a 446-amino-acid chain: tRNA-2-methylthio-N(6)-dimethylallyladenosine synthase (446 aa).

Residues K3–R124 enclose the MTTase N-terminal domain. Residues C12, C48, C87, C162, C166, and C169 each contribute to the [4Fe-4S] cluster site. Residues Y148–A380 enclose the Radical SAM core domain. In terms of domain architecture, TRAM spans E383–R446.

Belongs to the methylthiotransferase family. MiaB subfamily. In terms of assembly, monomer. The cofactor is [4Fe-4S] cluster.

The protein localises to the cytoplasm. It carries out the reaction N(6)-dimethylallyladenosine(37) in tRNA + (sulfur carrier)-SH + AH2 + 2 S-adenosyl-L-methionine = 2-methylsulfanyl-N(6)-dimethylallyladenosine(37) in tRNA + (sulfur carrier)-H + 5'-deoxyadenosine + L-methionine + A + S-adenosyl-L-homocysteine + 2 H(+). Its function is as follows. Catalyzes the methylthiolation of N6-(dimethylallyl)adenosine (i(6)A), leading to the formation of 2-methylthio-N6-(dimethylallyl)adenosine (ms(2)i(6)A) at position 37 in tRNAs that read codons beginning with uridine. The protein is tRNA-2-methylthio-N(6)-dimethylallyladenosine synthase of Rickettsia bellii (strain OSU 85-389).